The primary structure comprises 155 residues: Transcription antitermination protein NusB (155 aa).

This sequence belongs to the NusB family.

In terms of biological role, involved in transcription antitermination. Required for transcription of ribosomal RNA (rRNA) genes. Binds specifically to the boxA antiterminator sequence of the ribosomal RNA (rrn) operons. The chain is Transcription antitermination protein NusB from Vibrio atlanticus (strain LGP32) (Vibrio splendidus (strain Mel32)).